The following is a 539-amino-acid chain: Glutamate/serine transporter AimA (539 aa).

13 consecutive transmembrane segments (helical) span residues 11-31, 36-56, 82-102, 137-157, 164-184, 199-219, 238-258, 283-303, 350-370, 401-421, 424-444, 457-477, and 486-506; these read FSLM…FGAW, IAGP…LFIA, SFIG…VIPV, AFAS…VNLF, ITIF…FVGF, GWAS…FNGF, IAVV…QIAF, LAIA…AFVS, LIVS…AEII, LKGL…VLYW, WPLT…YFYY, FKAG…SYLG, and VIHY…FYVW.

It belongs to the amino acid-polyamine-organocation (APC) superfamily. AGT (TC 2.A.3.11) family.

The protein resides in the cell membrane. Functionally, major glutamate and serine transporter. Cannot transport threonine. AimA is the major glutamate transporter under standard growth conditions when glutamate is not limiting in the medium. The protein is Glutamate/serine transporter AimA of Bacillus subtilis (strain 168).